The chain runs to 239 residues: ATP synthase subunit b (239 aa).

Low complexity predominate over residues methionine 1 to proline 22. The disordered stretch occupies residues methionine 1 to glutamate 64. Composition is skewed to basic and acidic residues over residues lysine 23–glutamine 33 and glutamate 45–glutamate 64. A helical membrane pass occupies residues serine 85–methionine 105.

The protein belongs to the ATPase B chain family. In terms of assembly, F-type ATPases have 2 components, F(1) - the catalytic core - and F(0) - the membrane proton channel. F(1) has five subunits: alpha(3), beta(3), gamma(1), delta(1), epsilon(1). F(0) has three main subunits: a(1), b(2) and c(10-14). The alpha and beta chains form an alternating ring which encloses part of the gamma chain. F(1) is attached to F(0) by a central stalk formed by the gamma and epsilon chains, while a peripheral stalk is formed by the delta and b chains.

The protein resides in the cell inner membrane. F(1)F(0) ATP synthase produces ATP from ADP in the presence of a proton or sodium gradient. F-type ATPases consist of two structural domains, F(1) containing the extramembraneous catalytic core and F(0) containing the membrane proton channel, linked together by a central stalk and a peripheral stalk. During catalysis, ATP synthesis in the catalytic domain of F(1) is coupled via a rotary mechanism of the central stalk subunits to proton translocation. Its function is as follows. Component of the F(0) channel, it forms part of the peripheral stalk, linking F(1) to F(0). In Koribacter versatilis (strain Ellin345), this protein is ATP synthase subunit b.